The primary structure comprises 251 residues: Type III pantothenate kinase (251 aa).

Position 6–13 (6–13 (DCGNSFIK)) interacts with ATP. Substrate contacts are provided by residues tyrosine 93 and 100–103 (GLDR). The active-site Proton acceptor is aspartate 102. Residue aspartate 122 coordinates K(+). Residue threonine 125 participates in ATP binding. Threonine 182 is a substrate binding site.

The protein belongs to the type III pantothenate kinase family. In terms of assembly, homodimer. The cofactor is NH4(+). Requires K(+) as cofactor.

The protein resides in the cytoplasm. It catalyses the reaction (R)-pantothenate + ATP = (R)-4'-phosphopantothenate + ADP + H(+). It functions in the pathway cofactor biosynthesis; coenzyme A biosynthesis; CoA from (R)-pantothenate: step 1/5. Catalyzes the phosphorylation of pantothenate (Pan), the first step in CoA biosynthesis. The chain is Type III pantothenate kinase from Azotobacter vinelandii (strain DJ / ATCC BAA-1303).